Here is a 471-residue protein sequence, read N- to C-terminus: D-hydantoinase (471 aa).

Residues His58, His60, and Lys150 each coordinate Zn(2+). N6-carboxylysine is present on Lys150. Tyr155 serves as a coordination point for substrate. His183 and His239 together coordinate Zn(2+). Residue Ser288 coordinates substrate. Asp315 is a Zn(2+) binding site. Asn337 is a substrate binding site.

This sequence belongs to the metallo-dependent hydrolases superfamily. Hydantoinase/dihydropyrimidinase family. Homotetramer. Zn(2+) is required as a cofactor. The cofactor is Ni(2+). Co(2+) serves as cofactor. Requires Mn(2+) as cofactor. In terms of processing, carboxylation allows a single lysine to coordinate two zinc ions.

Its activity is regulated as follows. Completely inhibited by p-chloromercuribenzoate and partially inhibited by metal chelating agents. Its function is as follows. Catalyzes the stereospecific hydrolysis of the cyclic amide bond of D-hydantoin. Has no activity on dihydropyrimidines. The sequence is that of D-hydantoinase from Geobacillus stearothermophilus (Bacillus stearothermophilus).